A 476-amino-acid chain; its full sequence is NAC domain-containing protein 86 (476 aa).

Residues 6–157 (LPPGFRFHPT…AYALCRVFKK (152 aa)) enclose the NAC domain. The DNA-binding element occupies 105-163 (IGTKKTLVYYRGRAPHGIRTGWVMHEYRLDESECEPSAFGMQDAYALCRVFKKIVIEAK).

In terms of tissue distribution, expressed in a few sieve element cells before enucleation and in phloem-pole pericycle cells.

It localises to the nucleus. Functionally, transcription factor directing sieve element enucleation and cytosol degradation. Not required for formation of lytic vacuoles. Regulates, with NAC045, the transcription of NEN1, NEN2, NEN3, NEN4, RTM1, RTM2, UBP16, PLDZETA, ABCB10 and At1g26450. The polypeptide is NAC domain-containing protein 86 (Arabidopsis thaliana (Mouse-ear cress)).